The sequence spans 270 residues: Type III pantothenate kinase (270 aa).

6-13 lines the ATP pocket; it reads DVRNTHTV. 109 to 112 provides a ligand contact to substrate; that stretch reads GADR. The active-site Proton acceptor is Asp-111. Residue Asp-131 coordinates K(+). Residue Ser-134 coordinates ATP. Thr-186 is a binding site for substrate.

This sequence belongs to the type III pantothenate kinase family. Homodimer. The cofactor is NH4(+). It depends on K(+) as a cofactor.

The protein localises to the cytoplasm. The catalysed reaction is (R)-pantothenate + ATP = (R)-4'-phosphopantothenate + ADP + H(+). It participates in cofactor biosynthesis; coenzyme A biosynthesis; CoA from (R)-pantothenate: step 1/5. In terms of biological role, catalyzes the phosphorylation of pantothenate (Pan), the first step in CoA biosynthesis. The protein is Type III pantothenate kinase of Mycolicibacterium gilvum (strain PYR-GCK) (Mycobacterium gilvum (strain PYR-GCK)).